We begin with the raw amino-acid sequence, 1199 residues long: DNA-directed RNA polymerase subunit beta (1199 aa).

The interval 1175–1199 is disordered; it reads EEKKAHEAAAQATDGKSANSTDDKK. Polar residues predominate over residues 1188–1199; that stretch reads DGKSANSTDDKK.

This sequence belongs to the RNA polymerase beta chain family. The RNAP catalytic core consists of 2 alpha, 1 beta, 1 beta' and 1 omega subunit. When a sigma factor is associated with the core the holoenzyme is formed, which can initiate transcription.

The enzyme catalyses RNA(n) + a ribonucleoside 5'-triphosphate = RNA(n+1) + diphosphate. In terms of biological role, DNA-dependent RNA polymerase catalyzes the transcription of DNA into RNA using the four ribonucleoside triphosphates as substrates. The polypeptide is DNA-directed RNA polymerase subunit beta (Lacticaseibacillus casei (strain BL23) (Lactobacillus casei)).